A 439-amino-acid chain; its full sequence is Putative myrosinase 3 (439 aa).

The first 19 residues, 1–19, serve as a signal peptide directing secretion; it reads MKFRALGLVLLLAVETCKA. N-linked (GlcNAc...) asparagine glycosylation is present at asparagine 33. A beta-D-glucoside is bound by residues histidine 145, 190–191, and tyrosine 316; that span reads NQ. The N-linked (GlcNAc...) asparagine glycan is linked to asparagine 336. A beta-D-glucoside-binding residues include glutamate 386 and tryptophan 404. Glutamate 386 acts as the Nucleophile in catalysis.

This sequence belongs to the glycosyl hydrolase 1 family. In terms of tissue distribution, expressed specifically in stamens and petals.

It catalyses the reaction a thioglucoside + H2O = a sugar + a thiol.. This chain is Putative myrosinase 3, found in Arabidopsis thaliana (Mouse-ear cress).